Consider the following 205-residue polypeptide: Holliday junction branch migration complex subunit RuvA (205 aa).

A domain I region spans residues 1-64; the sequence is MIGKLKGLID…EDQIKLFGFR (64 aa). The tract at residues 65–143 is domain II; sequence TDHEREWFRL…ALSNVDPAVV (79 aa). The interval 144-154 is flexible linker; the sequence is QLSGALDDNRA. The domain III stretch occupies residues 154-205; that stretch reads APRPVTDAISALVNLGYGQPQAAAAIAAAARAAGDDAATAQLIKLGLKELSK.

Belongs to the RuvA family. Homotetramer. Forms an RuvA(8)-RuvB(12)-Holliday junction (HJ) complex. HJ DNA is sandwiched between 2 RuvA tetramers; dsDNA enters through RuvA and exits via RuvB. An RuvB hexamer assembles on each DNA strand where it exits the tetramer. Each RuvB hexamer is contacted by two RuvA subunits (via domain III) on 2 adjacent RuvB subunits; this complex drives branch migration. In the full resolvosome a probable DNA-RuvA(4)-RuvB(12)-RuvC(2) complex forms which resolves the HJ.

It localises to the cytoplasm. In terms of biological role, the RuvA-RuvB-RuvC complex processes Holliday junction (HJ) DNA during genetic recombination and DNA repair, while the RuvA-RuvB complex plays an important role in the rescue of blocked DNA replication forks via replication fork reversal (RFR). RuvA specifically binds to HJ cruciform DNA, conferring on it an open structure. The RuvB hexamer acts as an ATP-dependent pump, pulling dsDNA into and through the RuvAB complex. HJ branch migration allows RuvC to scan DNA until it finds its consensus sequence, where it cleaves and resolves the cruciform DNA. The chain is Holliday junction branch migration complex subunit RuvA from Rhodopseudomonas palustris (strain BisB5).